Here is a 208-residue protein sequence, read N- to C-terminus: Imidazoleglycerol-phosphate dehydratase (208 aa).

The protein belongs to the imidazoleglycerol-phosphate dehydratase family.

It localises to the cytoplasm. It carries out the reaction D-erythro-1-(imidazol-4-yl)glycerol 3-phosphate = 3-(imidazol-4-yl)-2-oxopropyl phosphate + H2O. The protein operates within amino-acid biosynthesis; L-histidine biosynthesis; L-histidine from 5-phospho-alpha-D-ribose 1-diphosphate: step 6/9. The protein is Imidazoleglycerol-phosphate dehydratase of Mycobacterium sp. (strain JLS).